A 763-amino-acid chain; its full sequence is Putative alpha-1,3-mannosyltransferase MNN15 (763 aa).

The Cytoplasmic portion of the chain corresponds to M1 to K7. A helical transmembrane segment spans residues I8–V28. At D29–I763 the chain is on the lumenal side. Residues N71, N157, and N169 are each glycosylated (N-linked (GlcNAc...) asparagine). Positions L617–P659 are disordered. Positions K649–P659 are enriched in basic and acidic residues.

Belongs to the MNN1/MNT family.

It localises to the golgi apparatus membrane. The protein operates within protein modification; protein glycosylation. Functionally, responsible for addition of the terminal mannose residues to the outer chain of core N-linked polysaccharides and to O-linked mannotriose. Implicated in late Golgi modifications. This chain is Putative alpha-1,3-mannosyltransferase MNN15 (MNN15), found in Candida albicans (strain SC5314 / ATCC MYA-2876) (Yeast).